The primary structure comprises 199 residues: Stress response protein SCP2 (199 aa).

It belongs to the CAPAB/TerDEXZ family.

The protein localises to the cytoplasm. This chain is Stress response protein SCP2 (yceC), found in Bacillus subtilis (strain 168).